Consider the following 638-residue polypeptide: 1-deoxy-D-xylulose-5-phosphate synthase (638 aa).

Residues His-74 and 115-117 (GHS) contribute to the thiamine diphosphate site. Asp-146 provides a ligand contact to Mg(2+). Thiamine diphosphate-binding positions include 147–148 (GA), Asn-175, Tyr-286, and Glu-366. Asn-175 is a Mg(2+) binding site.

Belongs to the transketolase family. DXPS subfamily. As to quaternary structure, homodimer. Requires Mg(2+) as cofactor. It depends on thiamine diphosphate as a cofactor.

It carries out the reaction D-glyceraldehyde 3-phosphate + pyruvate + H(+) = 1-deoxy-D-xylulose 5-phosphate + CO2. It functions in the pathway metabolic intermediate biosynthesis; 1-deoxy-D-xylulose 5-phosphate biosynthesis; 1-deoxy-D-xylulose 5-phosphate from D-glyceraldehyde 3-phosphate and pyruvate: step 1/1. In terms of biological role, catalyzes the acyloin condensation reaction between C atoms 2 and 3 of pyruvate and glyceraldehyde 3-phosphate to yield 1-deoxy-D-xylulose-5-phosphate (DXP). This chain is 1-deoxy-D-xylulose-5-phosphate synthase, found in Syntrophomonas wolfei subsp. wolfei (strain DSM 2245B / Goettingen).